The primary structure comprises 103 residues: Large ribosomal subunit protein bL21 (103 aa).

It belongs to the bacterial ribosomal protein bL21 family. As to quaternary structure, part of the 50S ribosomal subunit. Contacts protein L20.

Functionally, this protein binds to 23S rRNA in the presence of protein L20. This chain is Large ribosomal subunit protein bL21, found in Mycolicibacterium smegmatis (strain ATCC 700084 / mc(2)155) (Mycobacterium smegmatis).